The chain runs to 254 residues: 3-deoxy-manno-octulosonate cytidylyltransferase (254 aa).

It belongs to the KdsB family.

The protein localises to the cytoplasm. It catalyses the reaction 3-deoxy-alpha-D-manno-oct-2-ulosonate + CTP = CMP-3-deoxy-beta-D-manno-octulosonate + diphosphate. The protein operates within nucleotide-sugar biosynthesis; CMP-3-deoxy-D-manno-octulosonate biosynthesis; CMP-3-deoxy-D-manno-octulosonate from 3-deoxy-D-manno-octulosonate and CTP: step 1/1. It participates in bacterial outer membrane biogenesis; lipopolysaccharide biosynthesis. In terms of biological role, activates KDO (a required 8-carbon sugar) for incorporation into bacterial lipopolysaccharide in Gram-negative bacteria. The sequence is that of 3-deoxy-manno-octulosonate cytidylyltransferase from Bordetella bronchiseptica (strain ATCC BAA-588 / NCTC 13252 / RB50) (Alcaligenes bronchisepticus).